A 56-amino-acid polypeptide reads, in one-letter code: Alpha-conotoxin Pn1.2 (56 aa).

Residues 1–16 (MFTVFLLVVLATTVVS) form the signal peptide. Residues 17–39 (FTSDRASDGGNAAMSDLIALTIK) constitute a propeptide that is removed on maturation. 2 cysteine pairs are disulfide-bonded: Cys-41–Cys-47 and Cys-42–Cys-55. Residues 43–45 (SHP) form a ser-Xaa-Pro motif, crucial for potent interaction with nAChR region. A Cysteine amide modification is found at Cys-55.

It belongs to the conotoxin A superfamily. Post-translationally, non-native isomers 'ribbon' (with disulfide connectivity C1-C4; C2-C3) and 'beads' (with disulfide connectivity C1-C2; C3-C4) also inhibit high voltage-activated (HVA) calcium channel currents in rat DRG neurons (20-30% inhibition at 1 uM toxin). As to expression, expressed by the venom duct.

The protein localises to the secreted. Alpha-conotoxins act on postsynaptic membranes, they bind to the nicotinic acetylcholine receptors (nAChR) and thus inhibit them. This toxin inhibits human alpha-7/CHRNA7 and alpha-9-alpha-10/CHRNA9/CHRNA10 AChR (complete inhibition at 3 uM of toxin). In addition, this toxin inhibits high voltage-activated (HVA) calcium channel currents in rat DRG neurons (22% inhibition at 1 uM toxin) probably by activating GABA(B) receptors (GABBR1 and/or GABBR2). This is Alpha-conotoxin Pn1.2 from Conus pennaceus (Feathered cone).